The sequence spans 318 residues: Putative HTH-type transcriptional regulatory protein MJ1164 (318 aa).

The HTH cro/C1-type domain maps to 131–189; that stretch reads LKEVREAMGISVGKLAEVAGVSRKAIYKYETQMANPSVDVALKIEEFLDVPLVKGIDLF. Positions 142–161 form a DNA-binding region, H-T-H motif; that stretch reads VGKLAEVAGVSRKAIYKYET.

This Methanocaldococcus jannaschii (strain ATCC 43067 / DSM 2661 / JAL-1 / JCM 10045 / NBRC 100440) (Methanococcus jannaschii) protein is Putative HTH-type transcriptional regulatory protein MJ1164.